Here is a 385-residue protein sequence, read N- to C-terminus: Chaperone protein DnaJ (385 aa).

Residues 5-70 enclose the J domain; that stretch reads DYYEILEITR…SKRQIYDKYG (66 aa). A CR-type zinc finger spans residues 136–213; it reads GCKKEIHNSF…CKGSGFEISE (78 aa). The Zn(2+) site is built by Cys-149, Cys-152, Cys-165, Cys-168, Cys-187, Cys-190, Cys-201, and Cys-204. CXXCXGXG motif repeat units follow at residues 149–156, 165–172, 187–194, and 201–208; these read CSDCKGTG, CKDCGGKG, CPTCKGEG, and CSKCKGSG.

Belongs to the DnaJ family. Homodimer. The cofactor is Zn(2+).

It localises to the cytoplasm. Participates actively in the response to hyperosmotic and heat shock by preventing the aggregation of stress-denatured proteins and by disaggregating proteins, also in an autonomous, DnaK-independent fashion. Unfolded proteins bind initially to DnaJ; upon interaction with the DnaJ-bound protein, DnaK hydrolyzes its bound ATP, resulting in the formation of a stable complex. GrpE releases ADP from DnaK; ATP binding to DnaK triggers the release of the substrate protein, thus completing the reaction cycle. Several rounds of ATP-dependent interactions between DnaJ, DnaK and GrpE are required for fully efficient folding. Also involved, together with DnaK and GrpE, in the DNA replication of plasmids through activation of initiation proteins. The protein is Chaperone protein DnaJ of Helicobacter hepaticus (strain ATCC 51449 / 3B1).